Reading from the N-terminus, the 132-residue chain is UPF0299 membrane protein YohJ (132 aa).

The next 4 helical transmembrane spans lie at 7-27 (IIWQYLRAFVLIYACLYAGIF), 31-51 (LLPVTIPGSIIGMLILFVLLA), 63-83 (GCYVLIRYMALLFVPIGVGVM), and 93-113 (FGPVVVSCAVCTLVVFLVVSW).

This sequence belongs to the UPF0299 family.

It localises to the cell inner membrane. In Shigella boydii serotype 18 (strain CDC 3083-94 / BS512), this protein is UPF0299 membrane protein YohJ.